A 358-amino-acid chain; its full sequence is Protein Wnt-8 (358 aa).

The N-terminal stretch at 1 to 22 is a signal peptide; the sequence is MQNTTLFILATLLIFCPFFTAS. Cysteine 55 and cysteine 66 are disulfide-bonded. N-linked (GlcNAc...) asparagine glycosylation occurs at asparagine 104. Disulfide bonds link cysteine 105–cysteine 113, cysteine 115–cysteine 133, cysteine 181–cysteine 195, cysteine 183–cysteine 190, cysteine 260–cysteine 298, cysteine 276–cysteine 291, cysteine 295–cysteine 337, cysteine 313–cysteine 328, cysteine 315–cysteine 325, and cysteine 320–cysteine 321. Serine 187 is lipidated: O-palmitoleoyl serine. Asparagine 263 and asparagine 282 each carry an N-linked (GlcNAc...) asparagine glycan.

Belongs to the Wnt family. Homooligomer; disulfide-linked, leading to inactivation. Interacts with the long chain of cer1. Post-translationally, palmitoleoylation is required for efficient binding to frizzled receptors. Depalmitoleoylation leads to Wnt signaling pathway inhibition. In terms of processing, proteolytic processing by tiki1 and tiki2 promotes oxidation and formation of large disulfide-bond oligomers, leading to inactivation of wnt8.

Its subcellular location is the secreted. It localises to the extracellular space. The protein localises to the extracellular matrix. Its function is as follows. Ligand for members of the frizzled family of seven transmembrane receptors. Plays a role in ventral mesodermal patterning during embryogenesis. Mimics Nieuwkoop center activity. Causes dorsal mesodermal differentiation of animal cap ectoderm when coexpressed with noggin and nuclear, sequence-specific DNA-binding protein xBra. None of these molecules causes dorsal mesoderm formation when expressed alone. The polypeptide is Protein Wnt-8 (wnt8) (Xenopus laevis (African clawed frog)).